Consider the following 612-residue polypeptide: Cytokine-like nuclear factor N-PAC (612 aa).

Positions 22–81 (PKDLIWAKMKGFTPWPGMIVEPPLDLLTQQRRANTKCVFFFGSRNFAWIEENNIKPFEGP) constitute a PWWP domain. Residues 168–270 (AVEGENNADS…GASSSSPTAR (103 aa)) form a disordered region. 2 stretches are compositionally biased toward low complexity: residues 177-193 (SSASPTVTAATPATAKS) and 201-220 (AKPVSAVSATKAAKASTTKS). Residues 228 to 240 (AHQTPTGANTSGL) show a composition bias toward polar residues. The segment at 276–279 (DDLL) is interaction with histone H3. The tract at residues 319–612 (RDIVPSELTF…SSAVFVRSRF (294 aa)) is dehydrogenase domain. NAD(+)-binding positions include 329-343 (GFLGLGMMGSTIVKD), T421, and R564.

This sequence belongs to the HIBADH-related family. NP60 subfamily. In terms of assembly, binds to mononucleosomes. Interacts with male-specific lethal (MSL) histone acetyltransferase complex at least composed of mof, msl-1, msl-2 and msl-3.

The protein localises to the chromosome. Nucleosome-destabilizing factor that is recruited to genes during transcriptional activation and colocalizes with a subset of trimethylated 'Lys-36' histone H3 (H3K36me3)-enriched regions. Binds DNA (in vitro). Facilitates Pol II transcription through nucleosomes. Facilitates male-specific lethal (MSL) histone acetyltransferase complex targeting to active genes on the X chromosome. Stimulates the acetylation of 'Lys-56' of nucleosomal histone H3 (H3K56ac) by nej. The protein is Cytokine-like nuclear factor N-PAC of Drosophila pseudoobscura pseudoobscura (Fruit fly).